Here is a 490-residue protein sequence, read N- to C-terminus: Ketol-acid reductoisomerase (NADP(+)) (490 aa).

Residues 16 to 207 (INKCRFMKKE…GGHRAGVLES (192 aa)) enclose the KARI N-terminal Rossmann domain. NADP(+) is bound by residues 44-47 (CGAQ), K67, S77, and 107-109 (DKQ). H131 is an active-site residue. G157 is a binding site for NADP(+). KARI C-terminal knotted domains follow at residues 208 to 343 (SFIA…TAPV) and 344 to 483 (YNEK…MKKM). 4 residues coordinate Mg(2+): D216, E220, E388, and E392. S413 contacts substrate.

This sequence belongs to the ketol-acid reductoisomerase family. Mg(2+) is required as a cofactor.

The enzyme catalyses (2R)-2,3-dihydroxy-3-methylbutanoate + NADP(+) = (2S)-2-acetolactate + NADPH + H(+). The catalysed reaction is (2R,3R)-2,3-dihydroxy-3-methylpentanoate + NADP(+) = (S)-2-ethyl-2-hydroxy-3-oxobutanoate + NADPH + H(+). The protein operates within amino-acid biosynthesis; L-isoleucine biosynthesis; L-isoleucine from 2-oxobutanoate: step 2/4. Its pathway is amino-acid biosynthesis; L-valine biosynthesis; L-valine from pyruvate: step 2/4. In terms of biological role, involved in the biosynthesis of branched-chain amino acids (BCAA). Catalyzes an alkyl-migration followed by a ketol-acid reduction of (S)-2-acetolactate (S2AL) to yield (R)-2,3-dihydroxy-isovalerate. In the isomerase reaction, S2AL is rearranged via a Mg-dependent methyl migration to produce 3-hydroxy-3-methyl-2-ketobutyrate (HMKB). In the reductase reaction, this 2-ketoacid undergoes a metal-dependent reduction by NADPH to yield (R)-2,3-dihydroxy-isovalerate. This chain is Ketol-acid reductoisomerase (NADP(+)), found in Buchnera aphidicola subsp. Acyrthosiphon pisum (strain 5A).